Here is a 457-residue protein sequence, read N- to C-terminus: Siroheme synthase (457 aa).

Residues 1 to 204 form a precorrin-2 dehydrogenase /sirohydrochlorin ferrochelatase region; that stretch reads MDHLPIFCQL…NDQKAITETT (204 aa). NAD(+) contacts are provided by residues 22-23 and 43-44; these read DV and LA. S128 carries the post-translational modification Phosphoserine. The segment at 216-457 is uroporphyrinogen-III C-methyltransferase; that stretch reads GEVVLVGAGP…RDKLNWFSNH (242 aa). Residue P225 coordinates S-adenosyl-L-methionine. Catalysis depends on D248, which acts as the Proton acceptor. K270 serves as the catalytic Proton donor. Residues 301–303, I306, 331–332, M382, and G411 each bind S-adenosyl-L-methionine; these read GGD and TA.

This sequence in the N-terminal section; belongs to the precorrin-2 dehydrogenase / sirohydrochlorin ferrochelatase family. It in the C-terminal section; belongs to the precorrin methyltransferase family.

The enzyme catalyses uroporphyrinogen III + 2 S-adenosyl-L-methionine = precorrin-2 + 2 S-adenosyl-L-homocysteine + H(+). It carries out the reaction precorrin-2 + NAD(+) = sirohydrochlorin + NADH + 2 H(+). It catalyses the reaction siroheme + 2 H(+) = sirohydrochlorin + Fe(2+). The protein operates within cofactor biosynthesis; adenosylcobalamin biosynthesis; precorrin-2 from uroporphyrinogen III: step 1/1. Its pathway is cofactor biosynthesis; adenosylcobalamin biosynthesis; sirohydrochlorin from precorrin-2: step 1/1. It functions in the pathway porphyrin-containing compound metabolism; siroheme biosynthesis; precorrin-2 from uroporphyrinogen III: step 1/1. It participates in porphyrin-containing compound metabolism; siroheme biosynthesis; siroheme from sirohydrochlorin: step 1/1. The protein operates within porphyrin-containing compound metabolism; siroheme biosynthesis; sirohydrochlorin from precorrin-2: step 1/1. In terms of biological role, multifunctional enzyme that catalyzes the SAM-dependent methylations of uroporphyrinogen III at position C-2 and C-7 to form precorrin-2 via precorrin-1. Then it catalyzes the NAD-dependent ring dehydrogenation of precorrin-2 to yield sirohydrochlorin. Finally, it catalyzes the ferrochelation of sirohydrochlorin to yield siroheme. In Escherichia coli O6:H1 (strain CFT073 / ATCC 700928 / UPEC), this protein is Siroheme synthase.